Consider the following 403-residue polypeptide: S-adenosylmethionine synthase (403 aa).

Histidine 17 is an ATP binding site. Mg(2+) is bound at residue aspartate 19. Glutamate 45 contacts K(+). L-methionine-binding residues include glutamate 58 and glutamine 104. Residues 104-114 are flexible loop; that stretch reads QSPDIAQGVDT. ATP is bound by residues 179 to 181, 250 to 251, aspartate 259, 265 to 266, alanine 282, and lysine 286; these read DGK, KF, and RK. Aspartate 259 contacts L-methionine. L-methionine is bound at residue lysine 290.

Belongs to the AdoMet synthase family. In terms of assembly, homotetramer; dimer of dimers. It depends on Mg(2+) as a cofactor. K(+) serves as cofactor.

Its subcellular location is the cytoplasm. It carries out the reaction L-methionine + ATP + H2O = S-adenosyl-L-methionine + phosphate + diphosphate. The protein operates within amino-acid biosynthesis; S-adenosyl-L-methionine biosynthesis; S-adenosyl-L-methionine from L-methionine: step 1/1. Catalyzes the formation of S-adenosylmethionine (AdoMet) from methionine and ATP. The overall synthetic reaction is composed of two sequential steps, AdoMet formation and the subsequent tripolyphosphate hydrolysis which occurs prior to release of AdoMet from the enzyme. The chain is S-adenosylmethionine synthase from Mycobacterium bovis (strain ATCC BAA-935 / AF2122/97).